The following is a 203-amino-acid chain: MSVAPTRGNLIALKQQLRLAIQGYDLLERKRTVIMRELVGLIEEAKKLQEELLSTFEEAYRSLQKANLDLGIESVEEYASGIPEFKAMKIIFSSVMGVEVPEIQIERFETEIPYEIYSTNAALDQAYLVFRKALELVARVAVIENKVYRLAHEAKKTKKRVNALENLIIPHLKETIKYIQDTLEELEREELFRLKRLKEKVAR.

It belongs to the V-ATPase D subunit family.

Produces ATP from ADP in the presence of a proton gradient across the membrane. The chain is V-type ATP synthase subunit D from Thermotoga neapolitana (strain ATCC 49049 / DSM 4359 / NBRC 107923 / NS-E).